The sequence spans 117 residues: Ribonuclease P protein component (117 aa).

This sequence belongs to the RnpA family. In terms of assembly, consists of a catalytic RNA component (M1 or rnpB) and a protein subunit.

It catalyses the reaction Endonucleolytic cleavage of RNA, removing 5'-extranucleotides from tRNA precursor.. Its function is as follows. RNaseP catalyzes the removal of the 5'-leader sequence from pre-tRNA to produce the mature 5'-terminus. It can also cleave other RNA substrates such as 4.5S RNA. The protein component plays an auxiliary but essential role in vivo by binding to the 5'-leader sequence and broadening the substrate specificity of the ribozyme. The sequence is that of Ribonuclease P protein component from Lactococcus lactis subsp. cremoris (strain MG1363).